A 634-amino-acid polypeptide reads, in one-letter code: Nicotinic receptor-associated protein 1 (634 aa).

C2 domains are found at residues 1–141 (MNQP…KAHL) and 159–295 (KTGS…EILL). 11 residues coordinate Ca(2+): Leu-29, Asp-30, Asp-36, Asp-105, Asp-107, Asp-119, Asp-189, Asp-195, Asp-251, Asp-253, and Asp-271. Residues 338 to 557 (DFAVAVDFTA…LDPDVIQENL (220 aa)) enclose the VWFA domain. The interval 576–603 (RGFQPRPVDDPWRRDSPPPEFDPILDGT) is disordered. A compositionally biased stretch (basic and acidic residues) spans 582–592 (PVDDPWRRDSP).

Belongs to the copine family. Interacts with nicotinic acetylcholine receptor. Ca(2+) serves as cofactor. Expressed in head and tail neurons, ventral cord moto-neurons, body wall muscles and hypodermal cells of the vulva.

The protein localises to the cell membrane. Its function is as follows. Exhibits calcium-dependent phospholipid binding properties. May function in membrane trafficking. Regulates synaptic levels of nicotinic acetylcholine receptor subunit lev-1 and unc-38 in the nerve cord. Involved in nicotinic acetylcholine receptor (nAChR)-mediated sensitivity to nicotine and levamisole. Affects directional sperm motility. In Caenorhabditis elegans, this protein is Nicotinic receptor-associated protein 1 (nra-1).